The following is a 185-amino-acid chain: Ribonuclease M5 (185 aa).

The 84-residue stretch at 4–87 (KEIIVVEGKD…AFLPKEEALA (84 aa)) folds into the Toprim domain. Mg(2+)-binding residues include Glu-10, Asp-56, and Asp-58.

The protein belongs to the ribonuclease M5 family. The cofactor is Mg(2+).

It is found in the cytoplasm. The catalysed reaction is Endonucleolytic cleavage of RNA, removing 21 and 42 nucleotides, respectively, from the 5'- and 3'-termini of a 5S-rRNA precursor.. In terms of biological role, required for correct processing of both the 5' and 3' ends of 5S rRNA precursor. Cleaves both sides of a double-stranded region yielding mature 5S rRNA in one step. The chain is Ribonuclease M5 from Bacillus anthracis.